A 657-amino-acid polypeptide reads, in one-letter code: Pentatricopeptide repeat-containing protein At5g44230 (657 aa).

12 PPR repeats span residues 45-79, 80-112, 113-147, 148-178, 183-213, 214-244, 245-279, 280-314, 317-347, 348-383, 384-419, and 420-450; these read KELLVSSLISKLDDCINLNQIKQIHGHVLRKGLDQ, SCYILTKLIRTLTKLGVPMDPYARRVIEPVQFR, NPFLWTAVIRGYAIEGKFDEAIAMYGCMRKEEITP, VSFTFSALLKACGTMKDLNLGRQFHAQTFRL, FVYVGNTMIDMYVKCESIDCARKVFDEMPER, DVISWTELIAAYARVGNMECAAELFESLPTK, DMVAWTAMVTGFAQNAKPQEALEYFDRMEKSGIRA, DEVTVAGYISACAQLGASKYADRAVQIAQKSGYSP, HVVIGSALIDMYSKCGNVEEAVNVFMSMNNK, NVFTYSSMILGLATHGRAQEALHLFHYMVTQTEIKP, NTVTFVGALMACSHSGLVDQGRQVFDSMYQTFGVQP, and TRDHYTCMVDLLGRTGRLQEALELIKTMSVE. A type E motif region spans residues 455-530; it reads VWGALLGACR…TPAVSWVVDK (76 aa). Residues 532–562 form a type E(+) motif region; that stretch reads GQMHKFFPGNLNHPMSNKIQDKLEELVERLT. Residues 563–657 are type DYW motif; that stretch reads VLGYQPDLSS…SGDCSCGDFW (95 aa).

This sequence belongs to the PPR family. PCMP-H subfamily.

The chain is Pentatricopeptide repeat-containing protein At5g44230 (PCMP-H17) from Arabidopsis thaliana (Mouse-ear cress).